The following is a 214-amino-acid chain: Sugar transporter SWEET1 (214 aa).

7 consecutive transmembrane segments (helical) span residues 3 to 23, 38 to 58, 65 to 85, 93 to 113, 125 to 145, 157 to 177, and 181 to 201; these read WMWL…SSGL, IQFL…YYGY, LIIV…AYIL, VVSQ…YFTL, LGLF…ADLA, SFPL…YGWV, and LYIT…FWLF. The 84-residue stretch at 6–89 folds into the MtN3/slv 1 domain; it reads LLSGACIVFT…MAAYILYSLE (84 aa). Residues 124–207 enclose the MtN3/slv 2 domain; sequence QLGLFCSIFT…FWLFSRYPPD (84 aa).

The protein belongs to the SWEET sugar transporter family.

It is found in the golgi apparatus membrane. The protein resides in the cell membrane. Functionally, mediates sugar transport across membranes. The polypeptide is Sugar transporter SWEET1 (slc50a1) (Xenopus tropicalis (Western clawed frog)).